Here is a 120-residue protein sequence, read N- to C-terminus: Large ribosomal subunit protein bL17 (120 aa).

This sequence belongs to the bacterial ribosomal protein bL17 family. In terms of assembly, part of the 50S ribosomal subunit. Contacts protein L32.

In Geobacillus thermodenitrificans (strain NG80-2), this protein is Large ribosomal subunit protein bL17.